The sequence spans 593 residues: UvrABC system protein C (593 aa).

Residues 14-91 (DSPGCYLHKD…IQENMPKYNI (78 aa)) enclose the GIY-YIG domain. The 36-residue stretch at 196 to 231 (NKIVNGLTEKMKSAAMTMEFERAAEYRDLIEAISLL) folds into the UVR domain.

Belongs to the UvrC family. In terms of assembly, interacts with UvrB in an incision complex.

It is found in the cytoplasm. Functionally, the UvrABC repair system catalyzes the recognition and processing of DNA lesions. UvrC both incises the 5' and 3' sides of the lesion. The N-terminal half is responsible for the 3' incision and the C-terminal half is responsible for the 5' incision. The sequence is that of UvrABC system protein C from Streptococcus agalactiae serotype V (strain ATCC BAA-611 / 2603 V/R).